The primary structure comprises 600 residues: MNNQKYIRNFSIIAHIDHGKSTLADRLIEYCGGLQAREMSQQVLDSMDIEKERGITIKAQTVRLVYKAKDGNTYYLNLMDTPGHVDFAYEVSRSLAACEGSLLVVDSTQGVEAQTLANVYQAIENDHEIVPVLNKIDLPASEPDQVKQQIEDIIGIDASEAVLISAKSGIGIDLVLEAIVNKLPPPKESSTDILKALLVDSWYDPYLGVVILVRVIDGSLRKNMKVKMMATNSVYTIENVGYFTPKKHISDVLHAGEIGFFTASIKQVADCKVGDTITDEKKPCKQALPGFKPNLPVVFCGLYPTDSSEFEHLKDSLAKLRLNDASFEYEMESSSALGVGFRCGFLGLLHLEIIQERLSREFDLDLITTAPSVVYKIHMREGEVLEIHNPADLPDLQKIDSMEEPWIKATIMVPDEFLGAVLSLCTEKRGIQLDHNYIANRAKVVYKLPLNEIVYDFYDRLKSCSKGYASFEWQMDTYEPSELVKLGILVNSEVVDALSTIVHRSRAEQRGRALCVRLKDLIPRQQIDIAIQASIGSRIIARETIKALRKDVLSKCYGGDITRKRKLLEKQKAGKKRMRQYGNIEIPQSAFIAALKIGDE.

In terms of domain architecture, tr-type G spans 5 to 187 (KYIRNFSIIA…AIVNKLPPPK (183 aa)). GTP contacts are provided by residues 17–22 (DHGKST) and 134–137 (NKID).

Belongs to the TRAFAC class translation factor GTPase superfamily. Classic translation factor GTPase family. LepA subfamily.

It is found in the cell inner membrane. It catalyses the reaction GTP + H2O = GDP + phosphate + H(+). Its function is as follows. Required for accurate and efficient protein synthesis under certain stress conditions. May act as a fidelity factor of the translation reaction, by catalyzing a one-codon backward translocation of tRNAs on improperly translocated ribosomes. Back-translocation proceeds from a post-translocation (POST) complex to a pre-translocation (PRE) complex, thus giving elongation factor G a second chance to translocate the tRNAs correctly. Binds to ribosomes in a GTP-dependent manner. This chain is Elongation factor 4, found in Rickettsia bellii (strain OSU 85-389).